A 95-amino-acid chain; its full sequence is Aspartyl/glutamyl-tRNA(Asn/Gln) amidotransferase subunit C (95 aa).

The protein belongs to the GatC family. Heterotrimer of A, B and C subunits.

It catalyses the reaction L-glutamyl-tRNA(Gln) + L-glutamine + ATP + H2O = L-glutaminyl-tRNA(Gln) + L-glutamate + ADP + phosphate + H(+). The catalysed reaction is L-aspartyl-tRNA(Asn) + L-glutamine + ATP + H2O = L-asparaginyl-tRNA(Asn) + L-glutamate + ADP + phosphate + 2 H(+). In terms of biological role, allows the formation of correctly charged Asn-tRNA(Asn) or Gln-tRNA(Gln) through the transamidation of misacylated Asp-tRNA(Asn) or Glu-tRNA(Gln) in organisms which lack either or both of asparaginyl-tRNA or glutaminyl-tRNA synthetases. The reaction takes place in the presence of glutamine and ATP through an activated phospho-Asp-tRNA(Asn) or phospho-Glu-tRNA(Gln). This chain is Aspartyl/glutamyl-tRNA(Asn/Gln) amidotransferase subunit C, found in Methylocella silvestris (strain DSM 15510 / CIP 108128 / LMG 27833 / NCIMB 13906 / BL2).